A 216-amino-acid polypeptide reads, in one-letter code: Protein-L-isoaspartate O-methyltransferase (216 aa).

Residue Ser62 is part of the active site.

The protein belongs to the methyltransferase superfamily. L-isoaspartyl/D-aspartyl protein methyltransferase family.

The protein resides in the cytoplasm. It carries out the reaction [protein]-L-isoaspartate + S-adenosyl-L-methionine = [protein]-L-isoaspartate alpha-methyl ester + S-adenosyl-L-homocysteine. Catalyzes the methyl esterification of L-isoaspartyl residues in peptides and proteins that result from spontaneous decomposition of normal L-aspartyl and L-asparaginyl residues. It plays a role in the repair and/or degradation of damaged proteins. The protein is Protein-L-isoaspartate O-methyltransferase of Methanospirillum hungatei JF-1 (strain ATCC 27890 / DSM 864 / NBRC 100397 / JF-1).